Reading from the N-terminus, the 409-residue chain is Serine/threonine transporter SstT (409 aa).

9 consecutive transmembrane segments (helical) span residues 17–37 (LVGQ…FFPA), 49–69 (FVSA…MASI), 83–103 (ILLL…IASF), 142–162 (ALIS…GIAF), 180–200 (VSLI…GLVA), 218–238 (LVVL…LIVF), 301–321 (GAAI…GIAV), 331–351 (VVAS…LLLI), and 357–377 (LFGI…IIAI).

The protein belongs to the dicarboxylate/amino acid:cation symporter (DAACS) (TC 2.A.23) family.

It is found in the cell inner membrane. The enzyme catalyses L-serine(in) + Na(+)(in) = L-serine(out) + Na(+)(out). The catalysed reaction is L-threonine(in) + Na(+)(in) = L-threonine(out) + Na(+)(out). Its function is as follows. Involved in the import of serine and threonine into the cell, with the concomitant import of sodium (symport system). This chain is Serine/threonine transporter SstT, found in Pseudomonas aeruginosa (strain UCBPP-PA14).